The following is a 184-amino-acid chain: Ribosome-recycling factor (184 aa).

The protein belongs to the RRF family.

The protein resides in the cytoplasm. Functionally, responsible for the release of ribosomes from messenger RNA at the termination of protein biosynthesis. May increase the efficiency of translation by recycling ribosomes from one round of translation to another. In Natranaerobius thermophilus (strain ATCC BAA-1301 / DSM 18059 / JW/NM-WN-LF), this protein is Ribosome-recycling factor.